Here is a 28-residue protein sequence, read N- to C-terminus: Ranatuerin-2AVb (28 aa).

Cysteines 23 and 28 form a disulfide.

As to expression, expressed by the skin glands.

The protein resides in the secreted. Its function is as follows. Has antibacterial activity. This is Ranatuerin-2AVb from Rana arvalis (Moor frog).